The sequence spans 450 residues: Asparagine--tRNA ligase (450 aa).

The protein belongs to the class-II aminoacyl-tRNA synthetase family. As to quaternary structure, homodimer.

The protein resides in the cytoplasm. The catalysed reaction is tRNA(Asn) + L-asparagine + ATP = L-asparaginyl-tRNA(Asn) + AMP + diphosphate + H(+). The chain is Asparagine--tRNA ligase from Mycoplasmopsis pulmonis (strain UAB CTIP) (Mycoplasma pulmonis).